A 246-amino-acid polypeptide reads, in one-letter code: MRILLSNDDGYFAPGLAALAEALDGLGEVVVVAPEQNRSGASNSLTLDRPLLLKKAATGFYFVNGTPTDCVHLAVTGMLDKLPDIIVSGINLGANMGDDTIYSGTVAAATEGYLLGIPSIAISMTSFEGNNFASAARVARELVERFIRNPISEPVLLNVNVPDISYSDLKGTEVTRLGRRHKAEPVVKMQSPRNETVYWVGAAGAAADAGPGTDFNAVERGFVSITPLQIDLTHSAQLSHIDQWMK.

Residues Asp8, Asp9, Ser39, and Asn91 each contribute to the a divalent metal cation site.

This sequence belongs to the SurE nucleotidase family. The cofactor is a divalent metal cation.

It is found in the cytoplasm. The catalysed reaction is a ribonucleoside 5'-phosphate + H2O = a ribonucleoside + phosphate. Functionally, nucleotidase that shows phosphatase activity on nucleoside 5'-monophosphates. The sequence is that of 5'-nucleotidase SurE from Dechloromonas aromatica (strain RCB).